The following is a 131-amino-acid chain: QRFP-like peptide (131 aa).

The N-terminal stretch at 1 to 25 (MGVRVMRSRICVIGLLVLMLTQSEA) is a signal peptide. A propeptide spanning residues 26–94 (YSFREKSWRT…DDGISPADKR (69 aa)) is cleaved from the precursor. The segment at 48-131 (RRDGGDQAPS…RESRRSFGSD (84 aa)) is disordered. Polar residues predominate over residues 97 to 106 (MLQQLAQQLK). A Phenylalanine amide modification is found at phenylalanine 119. The span at 120–131 (GKRESRRSFGSD) shows a compositional bias: basic and acidic residues. Residues 123–131 (ESRRSFGSD) constitute a propeptide that is removed on maturation.

Belongs to the RFamide neuropeptide family.

The protein resides in the secreted. Functionally, ligand for the G-protein coupled receptor QRFPR. The protein is QRFP-like peptide of Branchiostoma floridae (Florida lancelet).